A 142-amino-acid chain; its full sequence is Photosystem II extrinsic protein U (142 aa).

The N-terminal stretch at 1-29 (MKGLVRLLTVFSLLLGCWGWLGTTQIAQA) is a signal peptide.

Belongs to the PsbU family. PSII is composed of 1 copy each of membrane proteins PsbA, PsbB, PsbC, PsbD, PsbE, PsbF, PsbH, PsbI, PsbJ, PsbK, PsbL, PsbM, PsbT, PsbX, PsbY, PsbZ, Psb30/Ycf12, peripheral proteins PsbO, CyanoQ (PsbQ), PsbU, PsbV and a large number of cofactors. It forms dimeric complexes.

It is found in the cellular thylakoid membrane. In terms of biological role, one of the extrinsic, lumenal subunits of photosystem II (PSII). PSII is a light-driven water plastoquinone oxidoreductase, using light energy to abstract electrons from H(2)O, generating a proton gradient subsequently used for ATP formation. The extrinsic proteins stabilize the structure of photosystem II oxygen-evolving complex (OEC), the ion environment of oxygen evolution and protect the OEC against heat-induced inactivation. This Nostoc sp. (strain PCC 7120 / SAG 25.82 / UTEX 2576) protein is Photosystem II extrinsic protein U.